A 99-amino-acid polypeptide reads, in one-letter code: Aspartyl/glutamyl-tRNA(Asn/Gln) amidotransferase subunit C (99 aa).

It belongs to the GatC family. In terms of assembly, heterotrimer of A, B and C subunits.

The enzyme catalyses L-glutamyl-tRNA(Gln) + L-glutamine + ATP + H2O = L-glutaminyl-tRNA(Gln) + L-glutamate + ADP + phosphate + H(+). It catalyses the reaction L-aspartyl-tRNA(Asn) + L-glutamine + ATP + H2O = L-asparaginyl-tRNA(Asn) + L-glutamate + ADP + phosphate + 2 H(+). In terms of biological role, allows the formation of correctly charged Asn-tRNA(Asn) or Gln-tRNA(Gln) through the transamidation of misacylated Asp-tRNA(Asn) or Glu-tRNA(Gln) in organisms which lack either or both of asparaginyl-tRNA or glutaminyl-tRNA synthetases. The reaction takes place in the presence of glutamine and ATP through an activated phospho-Asp-tRNA(Asn) or phospho-Glu-tRNA(Gln). This chain is Aspartyl/glutamyl-tRNA(Asn/Gln) amidotransferase subunit C, found in Mycolicibacterium vanbaalenii (strain DSM 7251 / JCM 13017 / BCRC 16820 / KCTC 9966 / NRRL B-24157 / PYR-1) (Mycobacterium vanbaalenii).